Here is a 198-residue protein sequence, read N- to C-terminus: Alpha-S1-casein (198 aa).

Positions 1-15 (MKLLILTCLVASAVA) are cleaved as a signal peptide. 2 disordered regions span residues 28-47 (QTQR…LKEE) and 71-97 (SEST…EQKH). A phosphoserine mark is found at Ser39, Ser80, Ser81, Ser83, Ser84, and Ser85.

Belongs to the alpha-casein family. Mammary gland specific. Secreted in milk.

It is found in the secreted. In terms of biological role, important role in the capacity of milk to transport calcium phosphate. This is Alpha-S1-casein (CSN1S1) from Cavia porcellus (Guinea pig).